Consider the following 940-residue polypeptide: AP-2 complex subunit alpha (940 aa).

A phosphoserine mark is found at Ser-632 and Ser-634. The segment covering 651 to 662 has biased composition (polar residues); that stretch reads SHSKLNNSNANT. Residues 651 to 679 are disordered; that stretch reads SHSKLNNSNANTDLLGLSTPPSNNIGSGS. Residues 668 to 679 are compositionally biased toward low complexity; it reads STPPSNNIGSGS.

This sequence belongs to the adaptor complexes large subunit family. As to quaternary structure, adaptor protein complex 2 (AP-2) is a heterotetramer composed of two large adaptins (alpha-type and beta-type subunits), a medium adaptin (mu-type subunit AP50) and a small adaptin (sigma-type subunit AP17). Expressed in the Garland cells, imaginal disks, adult midgut precursors, the antenno-maxillary complex, the endoderm, the fat bodies, and the visceral mesoderm and cells of the CNS and PNS including neuroblasts, the presumptive stomatogastric nervous system, and the lateral chordotonal sense organs.

The protein resides in the cell membrane. It is found in the membrane. The protein localises to the coated pit. In terms of biological role, adaptins are components of the adapter complexes which link clathrin to receptors in coated vesicles. Clathrin-associated protein complexes are believed to interact with the cytoplasmic tails of membrane proteins, leading to their selection and concentration. AP-2alpha is a subunit of the plasma membrane adapter. In Drosophila melanogaster (Fruit fly), this protein is AP-2 complex subunit alpha (AP-2alpha).